The sequence spans 750 residues: 3-isopropylmalate dehydratase (750 aa).

[4Fe-4S] cluster contacts are provided by Cys353, Cys413, and Cys416. The tract at residues Lys492–Gly524 is disordered.

This sequence belongs to the aconitase/IPM isomerase family. As to quaternary structure, monomer. [4Fe-4S] cluster serves as cofactor.

It catalyses the reaction (2R,3S)-3-isopropylmalate = (2S)-2-isopropylmalate. Its pathway is amino-acid biosynthesis; L-leucine biosynthesis; L-leucine from 3-methyl-2-oxobutanoate: step 2/4. In terms of biological role, catalyzes the isomerization between 2-isopropylmalate and 3-isopropylmalate, via the formation of 2-isopropylmaleate. This Rhizopus niveus protein is 3-isopropylmalate dehydratase (LEU1).